A 373-amino-acid polypeptide reads, in one-letter code: DNA replication and repair protein RecF (373 aa).

Residue 30–37 (GPNGQGKT) coordinates ATP.

Belongs to the RecF family.

The protein localises to the cytoplasm. In terms of biological role, the RecF protein is involved in DNA metabolism; it is required for DNA replication and normal SOS inducibility. RecF binds preferentially to single-stranded, linear DNA. It also seems to bind ATP. The sequence is that of DNA replication and repair protein RecF from Streptomyces avermitilis (strain ATCC 31267 / DSM 46492 / JCM 5070 / NBRC 14893 / NCIMB 12804 / NRRL 8165 / MA-4680).